Consider the following 651-residue polypeptide: Cysteine-rich receptor-like protein kinase 42 (651 aa).

The first 28 residues, 1–28, serve as a signal peptide directing secretion; it reads MRCLTKTRSFHYVIIFYSFFFLPFLSSS. The Extracellular portion of the chain corresponds to 29–251; the sequence is SDDQRTTVSG…HHKFHVLFNK (223 aa). 2 Gnk2-homologous domains span residues 35 to 135 and 137 to 236; these read TVSG…TYEF and DESV…DHKF. Residues Asn-79 and Asn-151 are each glycosylated (N-linked (GlcNAc...) asparagine). A helical transmembrane segment spans residues 252–272; sequence GVIVAIVLTTSAFVMLILLAT. The Cytoplasmic portion of the chain corresponds to 273–651; sequence YVIMTKVSKT…SSESSTTRTI (379 aa). The Protein kinase domain occupies 315–604; that stretch reads FSHKKMLGQG…IPSPTSPPFL (290 aa). ATP is bound by residues 321 to 329 and Lys-343; that span reads LGQGGNGTV. The residue at position 388 (Tyr-388) is a Phosphotyrosine. Asp-440 functions as the Proton acceptor in the catalytic mechanism. 2 positions are modified to phosphoserine: Ser-444 and Ser-473. Phosphothreonine occurs at positions 474 and 479. Phosphotyrosine is present on Tyr-487.

This sequence belongs to the protein kinase superfamily. Ser/Thr protein kinase family. CRK subfamily.

Its subcellular location is the membrane. It carries out the reaction L-seryl-[protein] + ATP = O-phospho-L-seryl-[protein] + ADP + H(+). It catalyses the reaction L-threonyl-[protein] + ATP = O-phospho-L-threonyl-[protein] + ADP + H(+). This Arabidopsis thaliana (Mouse-ear cress) protein is Cysteine-rich receptor-like protein kinase 42 (CRK42).